The following is a 367-amino-acid chain: MKFDLLRTDGGARRGQLHLAHGVVQTPVFMPVGTYGTVKAMSPTEIADIGFEMLLSNTFHLWLRPGLEVIEAHGGLHRFMGWDKPILTDSGGFQVFSLGKLRKITEEGVKFASPTNGDKLFLTPETSMQIQRTLNSDIVMIFDECTPYPATERQAADSMRMSLRWAARSKAAHAGNPNALYGIVQGGMYEALRDESARELIGMDFDGYAIGGLSVGEPKDDMTRILAHTAPQLPADKPRYLMGVGTPSDLVAAVAAGIDQFDCVLPTRNARHGILFTRRGEIRIRNARWKLDTAPIDEECDCYACRHFTRAYVHHLIRAGEILGARLTTLHNLHYYHRLMAEVRAAIDAQRFSEFVARFHATQALGW.

The Proton acceptor role is filled by Asp89. Substrate is bound by residues 89-93 (DSGGF), Asp143, Gln185, and Gly212. The interval 243–249 (GVGTPSD) is RNA binding. Asp262 functions as the Nucleophile in the catalytic mechanism. An RNA binding; important for wobble base 34 recognition region spans residues 267 to 271 (TRNAR). 4 residues coordinate Zn(2+): Cys300, Cys302, Cys305, and His331.

It belongs to the queuine tRNA-ribosyltransferase family. As to quaternary structure, homodimer. Within each dimer, one monomer is responsible for RNA recognition and catalysis, while the other monomer binds to the replacement base PreQ1. Zn(2+) is required as a cofactor.

The enzyme catalyses 7-aminomethyl-7-carbaguanine + guanosine(34) in tRNA = 7-aminomethyl-7-carbaguanosine(34) in tRNA + guanine. Its pathway is tRNA modification; tRNA-queuosine biosynthesis. Functionally, catalyzes the base-exchange of a guanine (G) residue with the queuine precursor 7-aminomethyl-7-deazaguanine (PreQ1) at position 34 (anticodon wobble position) in tRNAs with GU(N) anticodons (tRNA-Asp, -Asn, -His and -Tyr). Catalysis occurs through a double-displacement mechanism. The nucleophile active site attacks the C1' of nucleotide 34 to detach the guanine base from the RNA, forming a covalent enzyme-RNA intermediate. The proton acceptor active site deprotonates the incoming PreQ1, allowing a nucleophilic attack on the C1' of the ribose to form the product. After dissociation, two additional enzymatic reactions on the tRNA convert PreQ1 to queuine (Q), resulting in the hypermodified nucleoside queuosine (7-(((4,5-cis-dihydroxy-2-cyclopenten-1-yl)amino)methyl)-7-deazaguanosine). This chain is Queuine tRNA-ribosyltransferase, found in Thiobacillus denitrificans (strain ATCC 25259 / T1).